The sequence spans 163 residues: NADPH-dependent 7-cyano-7-deazaguanine reductase (163 aa).

Cysteine 54 acts as the Thioimide intermediate in catalysis. Aspartate 61 functions as the Proton donor in the catalytic mechanism. Substrate-binding positions include 76 to 78 and 95 to 96; these read VES and HE.

It belongs to the GTP cyclohydrolase I family. QueF type 1 subfamily.

The protein resides in the cytoplasm. The enzyme catalyses 7-aminomethyl-7-carbaguanine + 2 NADP(+) = 7-cyano-7-deazaguanine + 2 NADPH + 3 H(+). Its pathway is tRNA modification; tRNA-queuosine biosynthesis. Its function is as follows. Catalyzes the NADPH-dependent reduction of 7-cyano-7-deazaguanine (preQ0) to 7-aminomethyl-7-deazaguanine (preQ1). The protein is NADPH-dependent 7-cyano-7-deazaguanine reductase of Streptococcus thermophilus (strain CNRZ 1066).